A 691-amino-acid chain; its full sequence is Threonine--tRNA ligase (691 aa).

Positions 1 to 22 (MSVPAQPAPGADGGDPRQPIRV) are disordered. Residues 1–73 (MSVPAQPAPG…DADAEVTPIA (73 aa)) enclose the TGS domain. The interval 268–574 (DHRKLGVELD…LTEHYAGAFP (307 aa)) is catalytic. Zn(2+) contacts are provided by Cys-373, His-424, and His-551.

This sequence belongs to the class-II aminoacyl-tRNA synthetase family. Homodimer. The cofactor is Zn(2+).

The protein resides in the cytoplasm. The catalysed reaction is tRNA(Thr) + L-threonine + ATP = L-threonyl-tRNA(Thr) + AMP + diphosphate + H(+). In terms of biological role, catalyzes the attachment of threonine to tRNA(Thr) in a two-step reaction: L-threonine is first activated by ATP to form Thr-AMP and then transferred to the acceptor end of tRNA(Thr). Also edits incorrectly charged L-seryl-tRNA(Thr). The protein is Threonine--tRNA ligase of Mycobacterium marinum (strain ATCC BAA-535 / M).